Consider the following 279-residue polypeptide: Large ribosomal subunit protein uL2 (279 aa).

Disordered regions lie at residues 32-58 and 223-279; these read SLLTPLPKKGGRNAHGRITARHQGGGH and GVAM…RKRG. Composition is skewed to basic residues over residues 40–58 and 269–279; these read KGGRNAHGRITARHQGGGH and VRRRYATRKRG.

This sequence belongs to the universal ribosomal protein uL2 family. Part of the 50S ribosomal subunit. Forms a bridge to the 30S subunit in the 70S ribosome.

Functionally, one of the primary rRNA binding proteins. Required for association of the 30S and 50S subunits to form the 70S ribosome, for tRNA binding and peptide bond formation. It has been suggested to have peptidyltransferase activity; this is somewhat controversial. Makes several contacts with the 16S rRNA in the 70S ribosome. The sequence is that of Large ribosomal subunit protein uL2 from Salinispora tropica (strain ATCC BAA-916 / DSM 44818 / JCM 13857 / NBRC 105044 / CNB-440).